Consider the following 340-residue polypeptide: Pre-rRNA-processing protein esf-2 (340 aa).

2 stretches are compositionally biased toward basic and acidic residues: residues 1-12 (MPEDDVRNKFLD) and 19-32 (DAGH…DFQK). Residues 1–103 (MPEDDVRNKF…KSVLASDLPG (103 aa)) form a disordered region. The segment covering 44-64 (DDEDSEADDFTDAEEEHDQDD) has biased composition (acidic residues). Residues 65–95 (AESKDAPAKDGQETTDGKEKKDGKKEKEKKS) show a composition bias toward basic and acidic residues. Residues 124–214 (GVVYISRVPP…KKGSYYRDDI (91 aa)) form the RRM domain. The segment at 272-329 (AKKASKGSKAGGEGAAQVTESTIPSAAATTTTTTNDDKRRTFKQIPLAKKRKLDETQP) is disordered.

This sequence belongs to the ESF2/ABP1 family.

It localises to the nucleus. The protein resides in the nucleolus. Functionally, involved in the small subunit (SSU) processome assembly and function, and in the 18S rRNA synthesis. Required for the early cleavages at sites A0, A1 and A2. The chain is Pre-rRNA-processing protein esf-2 (esf-2) from Neurospora crassa (strain ATCC 24698 / 74-OR23-1A / CBS 708.71 / DSM 1257 / FGSC 987).